Consider the following 226-residue polypeptide: Thymidylate kinase (226 aa).

9 to 16 contributes to the ATP binding site; that stretch reads GPEGSGKS.

Belongs to the thymidylate kinase family.

The enzyme catalyses dTMP + ATP = dTDP + ADP. Functionally, phosphorylation of dTMP to form dTDP in both de novo and salvage pathways of dTTP synthesis. The protein is Thymidylate kinase of Roseiflexus sp. (strain RS-1).